The primary structure comprises 244 residues: tRNA pseudouridine synthase A (244 aa).

Catalysis depends on Asp-52, which acts as the Nucleophile. Tyr-111 is a substrate binding site.

This sequence belongs to the tRNA pseudouridine synthase TruA family. In terms of assembly, homodimer.

It catalyses the reaction uridine(38/39/40) in tRNA = pseudouridine(38/39/40) in tRNA. Formation of pseudouridine at positions 38, 39 and 40 in the anticodon stem and loop of transfer RNAs. The polypeptide is tRNA pseudouridine synthase A (Thermosipho africanus (strain TCF52B)).